The following is a 407-amino-acid chain: Schlafen-like protein 1 (407 aa).

Disordered stretches follow at residues 1 to 28 (MTPM…LPEL) and 137 to 191 (AQGP…CQGR). Residues 155 to 167 (GLSPGPSPGSGVP) are compositionally biased toward low complexity. Polar residues predominate over residues 181–190 (QAQQLQSCQG). Position 261 to 268 (261 to 268 (GVEDSGLV)) interacts with ATP. Positions 366 to 398 (RQRWLVELGKLEEKMKALMMEKEQLQQQLQQHG) form a coiled coil.

It belongs to the Schlafen family. Subgroup I subfamily.

This Homo sapiens (Human) protein is Schlafen-like protein 1 (SLFNL1).